Consider the following 244-residue polypeptide: Extracellular superoxide dismutase [Cu-Zn] (244 aa).

Residues 1–18 (MLALVCSCLLLAALPADT) form the signal peptide. Intrachain disulfides connect Cys-67-Cys-212 and Cys-129-Cys-211. Asn-111 carries an N-linked (GlcNAc...) asparagine glycan. Positions 118, 120, and 135 each coordinate Cu cation. Zn(2+)-binding residues include His-135, His-143, His-146, and Asp-149. Residue His-185 participates in Cu cation binding. A disordered region spans residues 221–244 (PWARQAQEHAERKKRRRESECKAA). Over residues 226-244 (AQEHAERKKRRRESECKAA) the composition is skewed to basic and acidic residues.

The protein belongs to the Cu-Zn superoxide dismutase family. Homotetramer. Directly interacts with ATP7A; this interaction is copper-dependent and is required for SOD3 activity. The cofactor is Cu cation. Zn(2+) serves as cofactor.

The protein localises to the secreted. Its subcellular location is the extracellular space. It localises to the golgi apparatus. It is found in the trans-Golgi network. The catalysed reaction is 2 superoxide + 2 H(+) = H2O2 + O2. Its function is as follows. Protect the extracellular space from toxic effect of reactive oxygen intermediates by converting superoxide radicals into hydrogen peroxide and oxygen. This chain is Extracellular superoxide dismutase [Cu-Zn] (SOD3), found in Oryctolagus cuniculus (Rabbit).